The chain runs to 742 residues: 2'-5'-oligoadenylate synthase 2 (742 aa).

Residues 1–35 form a disordered region; that stretch reads MGNWLTGNWSSDRSSGYSSGWSPGGSSGVPSGPVH. Gly2 carries the N-myristoyl glycine lipid modification. Residues 10–21 show a composition bias toward low complexity; that stretch reads SSDRSSGYSSGW. OAS domain regions lie at residues 60–374 and 382–721; these read VPSQ…YWDV and TPSH…WKVP. Lys417 is modified (N6-acetyllysine). Position 436 (Ser436) interacts with ATP. Positions 448, 450, and 519 each coordinate Mg(2+). Positions 582 and 585 each coordinate ATP.

The protein belongs to the 2-5A synthase family. In terms of assembly, homodimer. Requires Mg(2+) as cofactor. Post-translationally, myristoylation is not essential for its activity. Glycosylated. Glycosylation is essential for its activity. As to expression, expressed in the uterus. Expressed in mammary glands: expressed at low level before the establishment of lactation, then expression strongly increases, and subsequently decreases during early involution.

It is found in the cytoplasm. It localises to the perinuclear region. It catalyses the reaction 3 ATP = 5'-triphosphoadenylyl-(2'-&gt;5')-adenylyl-(2'-&gt;5')-adenosine + 2 diphosphate. With respect to regulation, produced as a latent enzyme which is activated by double stranded RNA (dsRNA) generated during the course of viral infection. The dsRNA activator must be at least 15 nucleotides long, and no modification of the 2'-hydroxyl group is tolerated. ssRNA or dsDNA do not act as activators. Strongly inhibited by copper, iron and zinc ions. Partially inhibited by cobalt and nickel ions. Its function is as follows. Interferon-induced, dsRNA-activated antiviral enzyme which plays a critical role in cellular innate antiviral response. Activated by detection of double stranded RNA (dsRNA): polymerizes higher oligomers of 2'-5'-oligoadenylates (2-5A) from ATP which then bind to the inactive monomeric form of ribonuclease L (RNASEL) leading to its dimerization and subsequent activation. Activation of RNASEL leads to degradation of cellular as well as viral RNA, resulting in the inhibition of protein synthesis, thus terminating viral replication. Can mediate the antiviral effect via the classical RNASEL-dependent pathway or an alternative antiviral pathway independent of RNASEL. In addition, it may also play a role in other cellular processes such as apoptosis, cell growth, differentiation and gene regulation. May act as a negative regulator of lactation, stopping lactation in virally infected mammary gland lobules, thereby preventing transmission of viruses to neonates. Non-infected lobules would not be affected, allowing efficient pup feeding during infection. The chain is 2'-5'-oligoadenylate synthase 2 from Mus musculus (Mouse).